A 117-amino-acid polypeptide reads, in one-letter code: Ribosome-binding factor A (117 aa).

It belongs to the RbfA family. Monomer. Binds 30S ribosomal subunits, but not 50S ribosomal subunits or 70S ribosomes.

The protein localises to the cytoplasm. One of several proteins that assist in the late maturation steps of the functional core of the 30S ribosomal subunit. Associates with free 30S ribosomal subunits (but not with 30S subunits that are part of 70S ribosomes or polysomes). Required for efficient processing of 16S rRNA. May interact with the 5'-terminal helix region of 16S rRNA. This chain is Ribosome-binding factor A, found in Leuconostoc citreum (strain KM20).